Consider the following 84-residue polypeptide: Beta-mammal/insect toxin Ts1 (84 aa).

The N-terminal stretch at 1–20 (MKGMILFISCLLLIGIVVEC) is a signal peptide. The LCN-type CS-alpha/beta domain maps to 21–82 (KEGYLMDHEG…VWDRATNKCG (62 aa)). Disulfide bonds link cysteine 31/cysteine 81, cysteine 35/cysteine 57, cysteine 43/cysteine 62, and cysteine 47/cysteine 64. Residue cysteine 81 is modified to Cysteine amide.

It belongs to the long (4 C-C) scorpion toxin superfamily. Sodium channel inhibitor family. C-terminal amidation is important for high activity. Expressed by the venom gland.

It is found in the secreted. In terms of biological role, voltage-gated sodium channels (Nav) gating-modifier. Acts both as alpha- and beta-toxin, since it affects not only activation but also inactivation of Nav channels. Binds to Nav domain DII and impairs the four Nav channel voltage sensors movements. Depending on Nav channel subtypes tested, can also bind Nav domains DIII (low affinity) and DIV (very low affinity). Acts on almost all the Nav channels tested (mammalian Nav1.2/SCN2A, Nav1.3/SCN3A, Nav1.4/SCN4A, Nav1.5/SCN5A, Nav1.6/SCN8A, Nav1.9/SCN11A, and insect DmNav1). Is highly active against both mammals and insects. Irreversibly modulates DmNav channels. Other Ts1 activities have been studied, such as immunomodulation, antimicrobial activity or exocrine secretion. This toxin exhibits an antifungal activity against filamentous fungi. In vitro, it has an important immunomodulatory effect on macrophages by stimulating the release of pro-inflammatory cytokines. It also shows an activity in exocrine secretion in pancreas, stomach and adrenal gland. The polypeptide is Beta-mammal/insect toxin Ts1 (Tityus serrulatus (Brazilian scorpion)).